A 171-amino-acid polypeptide reads, in one-letter code: Allophycocyanin subunit beta-18 (171 aa).

N72 carries the post-translational modification N4-methylasparagine. C82 is a (2R,3E)-phycocyanobilin binding site.

Belongs to the phycobiliprotein family. As to quaternary structure, heterodimer of an alpha and a beta chain. Contains one covalently linked bilin chromophore.

It is found in the plastid. Its subcellular location is the chloroplast thylakoid membrane. Functionally, light-harvesting photosynthetic bile pigment-protein from the phycobiliprotein complex. Allophycocyanin has a maximum absorption at approximately 650 nanometers. The sequence is that of Allophycocyanin subunit beta-18 (apcF) from Aglaothamnion neglectum (Red alga).